We begin with the raw amino-acid sequence, 181 residues long: Interleukin-10 (181 aa).

A signal peptide spans 1–19 (MHGSALLCCCLVLLAGVGA). 2 disulfide bridges follow: C31-C129 and C81-C135. A glycan (N-linked (GlcNAc...) asparagine) is linked at N137.

Belongs to the IL-10 family. As to quaternary structure, homodimer. Interacts with IL10RA and IL10RB.

It is found in the secreted. Its function is as follows. Major immune regulatory cytokine that acts on many cells of the immune system where it has profound anti-inflammatory functions, limiting excessive tissue disruption caused by inflammation. Mechanistically, IL10 binds to its heterotetrameric receptor comprising IL10RA and IL10RB leading to JAK1 and STAT2-mediated phosphorylation of STAT3. In turn, STAT3 translocates to the nucleus where it drives expression of anti-inflammatory mediators. Targets antigen-presenting cells (APCs) such as macrophages and monocytes and inhibits their release of pro-inflammatory cytokines including granulocyte-macrophage colony-stimulating factor /GM-CSF, granulocyte colony-stimulating factor/G-CSF, IL-1 alpha, IL-1 beta, IL-6, IL-8 and TNF-alpha. Also interferes with antigen presentation by reducing the expression of MHC-class II and co-stimulatory molecules, thereby inhibiting their ability to induce T cell activation. In addition, controls the inflammatory response of macrophages by reprogramming essential metabolic pathways including mTOR signaling. This chain is Interleukin-10 (IL10), found in Canis lupus familiaris (Dog).